Consider the following 186-residue polypeptide: Mediator of RNA polymerase II transcription subunit 29 (186 aa).

Residues Met1–Gln12 show a composition bias toward polar residues. Residues Met1 to Gln41 are disordered. Positions Gly25–Gln41 are enriched in low complexity.

Belongs to the Mediator complex subunit 29 family. In terms of assembly, component of the Mediator complex.

The protein resides in the nucleus. Component of the Mediator complex, a coactivator involved in the regulated transcription of nearly all RNA polymerase II-dependent genes. Mediator functions as a bridge to convey information from gene-specific regulatory proteins to the basal RNA polymerase II transcription machinery. Mediator is recruited to promoters by direct interactions with regulatory proteins and serves as a scaffold for the assembly of a functional preinitiation complex with RNA polymerase II and the general transcription factors. The protein is Mediator of RNA polymerase II transcription subunit 29 (med29) of Xenopus laevis (African clawed frog).